A 144-amino-acid polypeptide reads, in one-letter code: UPF0102 protein Veis_0630 (144 aa).

The disordered stretch occupies residues 11 to 31 (PPAAAPGPAPAPASAATASER).

The protein belongs to the UPF0102 family.

The sequence is that of UPF0102 protein Veis_0630 from Verminephrobacter eiseniae (strain EF01-2).